The following is a 240-amino-acid chain: Keratinocyte-associated protein 3 (240 aa).

4 helical membrane passes run 21–41 (VGLA…VLHG), 63–83 (VISV…LLAS), 95–115 (LLAL…GLLL), and 163–183 (ALAL…LSGY).

It belongs to the TMEM54 family.

The protein localises to the membrane. In Bos taurus (Bovine), this protein is Keratinocyte-associated protein 3 (KRTCAP3).